The chain runs to 491 residues: Ketol-acid reductoisomerase (NADP(+)) (491 aa).

The region spanning 14-208 (LKHLGKCRFM…GSHRAGVLES (195 aa)) is the KARI N-terminal Rossmann domain. NADP(+) is bound by residues 45–48 (CGSQ), arginine 68, and serine 78. Histidine 132 is an active-site residue. NADP(+) is bound at residue glycine 158. KARI C-terminal knotted domains lie at 209–344 (SFVA…QAPN) and 345–485 (YQQE…MQNM). Positions 217, 221, 389, and 393 each coordinate Mg(2+). Position 414 (serine 414) interacts with substrate.

It belongs to the ketol-acid reductoisomerase family. Requires Mg(2+) as cofactor.

The catalysed reaction is (2R)-2,3-dihydroxy-3-methylbutanoate + NADP(+) = (2S)-2-acetolactate + NADPH + H(+). It catalyses the reaction (2R,3R)-2,3-dihydroxy-3-methylpentanoate + NADP(+) = (S)-2-ethyl-2-hydroxy-3-oxobutanoate + NADPH + H(+). It participates in amino-acid biosynthesis; L-isoleucine biosynthesis; L-isoleucine from 2-oxobutanoate: step 2/4. Its pathway is amino-acid biosynthesis; L-valine biosynthesis; L-valine from pyruvate: step 2/4. Functionally, involved in the biosynthesis of branched-chain amino acids (BCAA). Catalyzes an alkyl-migration followed by a ketol-acid reduction of (S)-2-acetolactate (S2AL) to yield (R)-2,3-dihydroxy-isovalerate. In the isomerase reaction, S2AL is rearranged via a Mg-dependent methyl migration to produce 3-hydroxy-3-methyl-2-ketobutyrate (HMKB). In the reductase reaction, this 2-ketoacid undergoes a metal-dependent reduction by NADPH to yield (R)-2,3-dihydroxy-isovalerate. In Blochmanniella pennsylvanica (strain BPEN), this protein is Ketol-acid reductoisomerase (NADP(+)).